The sequence spans 227 residues: ATP synthase F(0) complex subunit a (227 aa).

A run of 6 helical transmembrane segments spans residues 14-34 (FLGI…FPTP), 69-89 (WAIL…LGLL), 99-119 (LSLN…IGMF), 139-159 (VPVL…ALGV), 165-185 (LTAG…LLTM), and 190-210 (ALLT…VAMI).

It belongs to the ATPase A chain family. In terms of assembly, component of the ATP synthase complex composed at least of ATP5F1A/subunit alpha, ATP5F1B/subunit beta, ATP5MC1/subunit c (homooctomer), MT-ATP6/subunit a, MT-ATP8/subunit 8, ATP5ME/subunit e, ATP5MF/subunit f, ATP5MG/subunit g, ATP5MK/subunit k, ATP5MJ/subunit j, ATP5F1C/subunit gamma, ATP5F1D/subunit delta, ATP5F1E/subunit epsilon, ATP5PF/subunit F6, ATP5PB/subunit b, ATP5PD/subunit d, ATP5PO/subunit OSCP. ATP synthase complex consists of a soluble F(1) head domain (subunits alpha(3) and beta(3)) - the catalytic core - and a membrane F(0) domain - the membrane proton channel (subunits c, a, 8, e, f, g, k and j). These two domains are linked by a central stalk (subunits gamma, delta, and epsilon) rotating inside the F1 region and a stationary peripheral stalk (subunits F6, b, d, and OSCP). Interacts with DNAJC30; interaction is direct.

The protein localises to the mitochondrion inner membrane. It catalyses the reaction H(+)(in) = H(+)(out). In terms of biological role, subunit a, of the mitochondrial membrane ATP synthase complex (F(1)F(0) ATP synthase or Complex V) that produces ATP from ADP in the presence of a proton gradient across the membrane which is generated by electron transport complexes of the respiratory chain. ATP synthase complex consist of a soluble F(1) head domain - the catalytic core - and a membrane F(1) domain - the membrane proton channel. These two domains are linked by a central stalk rotating inside the F(1) region and a stationary peripheral stalk. During catalysis, ATP synthesis in the catalytic domain of F(1) is coupled via a rotary mechanism of the central stalk subunits to proton translocation. With the subunit c (ATP5MC1), forms the proton-conducting channel in the F(0) domain, that contains two crucial half-channels (inlet and outlet) that facilitate proton movement from the mitochondrial intermembrane space (IMS) into the matrix. Protons are taken up via the inlet half-channel and released through the outlet half-channel, following a Grotthuss mechanism. The polypeptide is ATP synthase F(0) complex subunit a (Scyliorhinus canicula (Small-spotted catshark)).